We begin with the raw amino-acid sequence, 213 residues long: Outer-membrane lipoprotein carrier protein (213 aa).

Residues 1-23 (MKKLLKQSLLGFALVSMTGAAFA) form the signal peptide.

Belongs to the LolA family. As to quaternary structure, monomer.

Its subcellular location is the periplasm. Functionally, participates in the translocation of lipoproteins from the inner membrane to the outer membrane. Only forms a complex with a lipoprotein if the residue after the N-terminal Cys is not an aspartate (The Asp acts as a targeting signal to indicate that the lipoprotein should stay in the inner membrane). The chain is Outer-membrane lipoprotein carrier protein from Actinobacillus pleuropneumoniae serotype 7 (strain AP76).